A 515-amino-acid chain; its full sequence is 2,3-bisphosphoglycerate-independent phosphoglycerate mutase 1 (515 aa).

2 residues coordinate Mn(2+): aspartate 14 and serine 64. Residue serine 64 is the Phosphoserine intermediate of the active site. Substrate-binding positions include histidine 125, 155–156 (RD), arginine 187, arginine 193, 264–267 (RADR), and lysine 337. Residues aspartate 404, histidine 408, aspartate 445, histidine 446, and histidine 464 each contribute to the Mn(2+) site.

The protein belongs to the BPG-independent phosphoglycerate mutase family. Mn(2+) is required as a cofactor.

The catalysed reaction is (2R)-2-phosphoglycerate = (2R)-3-phosphoglycerate. The protein operates within carbohydrate degradation; glycolysis; pyruvate from D-glyceraldehyde 3-phosphate: step 3/5. In terms of biological role, catalyzes the interconversion of 2-phosphoglycerate and 3-phosphoglycerate. The protein is 2,3-bisphosphoglycerate-independent phosphoglycerate mutase 1 of Methanosarcina acetivorans (strain ATCC 35395 / DSM 2834 / JCM 12185 / C2A).